We begin with the raw amino-acid sequence, 124 residues long: Large ribosomal subunit protein bL12 (124 aa).

It belongs to the bacterial ribosomal protein bL12 family. In terms of assembly, homodimer. Part of the ribosomal stalk of the 50S ribosomal subunit. Forms a multimeric L10(L12)X complex, where L10 forms an elongated spine to which 2 to 4 L12 dimers bind in a sequential fashion. Binds GTP-bound translation factors.

Its function is as follows. Forms part of the ribosomal stalk which helps the ribosome interact with GTP-bound translation factors. Is thus essential for accurate translation. This is Large ribosomal subunit protein bL12 from Borreliella burgdorferi (strain ZS7) (Borrelia burgdorferi).